The primary structure comprises 1978 residues: Sodium channel protein type 8 subunit alpha (1978 aa).

Disordered regions lie at residues 1–20 (MAARVLAPPGPDSFKPFTPE) and 28–62 (RIAESKLKKPPKADGSHREDDEDSKPKPNSDLEAG). The Cytoplasmic segment spans residues 1–132 (MAARVLAPPG…RIAIKILIHS (132 aa)). The span at 28–61 (RIAESKLKKPPKADGSHREDDEDSKPKPNSDLEA) shows a compositional bias: basic and acidic residues. An I repeat occupies 114 to 442 (ILSPFNLIRR…KAMLEQLKKQ (329 aa)). A helical membrane pass occupies residues 133-151 (VFSMIIMCTILTNCVFMTF). Topologically, residues 152–158 (SNPPEWS) are extracellular. A helical membrane pass occupies residues 159–179 (KNVEYTFTGIYTFESLVKIIA). Residues 180-193 (RGFCIDGFTFLRDP) are Cytoplasmic-facing. A helical transmembrane segment spans residues 194 to 211 (WNWLDFSVIMMAYVTEFV). At 212 to 217 (DLGNVS) the chain is on the extracellular side. Asparagine 215 carries an N-linked (GlcNAc...) asparagine glycan. The chain crosses the membrane as a helical span at residues 218-234 (ALRTFRVLRALKTISVI). At 235–253 (PGLKTIVGALIQSVKKLSD) the chain is on the cytoplasmic side. A helical transmembrane segment spans residues 254–273 (VMILTVFCLSVFALIGLQLF). The Extracellular segment spans residues 274-355 (MGNLRNKCVV…PNYGYTSFDT (82 aa)). Cysteine 281 and cysteine 333 are oxidised to a cystine. Residues asparagine 289, asparagine 295, asparagine 308, and asparagine 326 are each glycosylated (N-linked (GlcNAc...) asparagine). The pore-forming intramembrane region spans 356–380 (FSWAFLALFRLMTQDYWENLYQLTL). Glutamate 373 contacts Na(+). Topologically, residues 381-387 (RAAGKTY) are extracellular. A helical membrane pass occupies residues 388–408 (MIFFVLVIFVGSFYLVNLILA). The Cytoplasmic portion of the chain corresponds to 409-751 (VVAMAYEEQN…EIVNLIVMDP (343 aa)). Disordered stretches follow at residues 446-530 (AQAA…KAFR) and 576-597 (DPGSENEFADDEHSTVEESEGR). A compositionally biased stretch (low complexity) spans 473 to 486 (SPRSSSELSKLSSK). Basic residues predominate over residues 489 to 500 (KERRNRRKKRKQ). 2 stretches are compositionally biased toward basic and acidic residues: residues 501 to 530 (KELSEGEEKGDPEKVFKSESEDGMRRKAFR) and 586 to 597 (DEHSTVEESEGR). Serine 518 and serine 520 each carry phosphoserine. An II repeat occupies 733–1005 (CHPYWIKLKE…QISVIRIKKG (273 aa)). A helical membrane pass occupies residues 752–770 (FVDLAITICIVLNTLFMAM). Residues 771 to 781 (EHHPMTPQFEH) lie on the Extracellular side of the membrane. The helical transmembrane segment at 782-801 (VLAVGNLVFTGIFTAEMFLK) threads the bilayer. Topologically, residues 802–815 (LIAMDPYYYFQEGW) are cytoplasmic. The chain crosses the membrane as a helical span at residues 816–835 (NIFDGFIVSLSLMELGLADV). Residues 836–837 (EG) are Extracellular-facing. The helical transmembrane segment at 838-855 (LSVLRSFRLLRVFKLAKS) threads the bilayer. The Cytoplasmic segment spans residues 856 to 871 (WPTLNMLIKIIGNSVG). Residues 872 to 890 (ALGNLTLVLAIIVFIFAVV) traverse the membrane as a helical segment. At 891–919 (GMQLFGKSYKECVCKISQECKLPRWHMND) the chain is on the extracellular side. A disulfide bridge links cysteine 904 with cysteine 910. The segment at residues 920–940 (FFHSFLIVFRVLCGEWIETMW) is an intramembrane region (pore-forming). Positions 934 and 937 each coordinate Na(+). Residues 941 to 953 (DCMEVAGQAMCLI) lie on the Extracellular side of the membrane. Residues cysteine 942 and cysteine 951 are joined by a disulfide bond. The helical transmembrane segment at 954-974 (VFMMVMVIGNLVVLNLFLALL) threads the bilayer. Over 975–1197 (LSSFSADNLA…TCFLIVEHNW (223 aa)) the chain is Cytoplasmic. The tract at residues 1105–1146 (NLNTEDVSSESDPEGSKDKLDDTSSSEGSTIDIKPEVEEVPV) is disordered. An III repeat occupies 1178-1493 (LGKSWWILRK…KKYYNAMKKL (316 aa)). A helical membrane pass occupies residues 1198–1215 (FETFIIFMILLSSGALAF). Over 1216–1228 (EDIYIEQRKTIRT) the chain is Extracellular. Residues 1229–1247 (ILEYADKVFTYIFILEMLL) form a helical membrane-spanning segment. Residues 1248 to 1261 (KWTAYGFVKFFTNA) lie on the Cytoplasmic side of the membrane. The helical transmembrane segment at 1262 to 1280 (WCWLDFLIVAVSLVSLIAN) threads the bilayer. The Extracellular portion of the chain corresponds to 1281 to 1288 (ALGYSELG). A helical membrane pass occupies residues 1289–1307 (AIKSLRTLRALRPLRALSR). At 1308 to 1324 (FEGMRVVVNALVGAIPS) the chain is on the cytoplasmic side. The helical transmembrane segment at 1325–1344 (IMNVLLVCLIFWLIFSIMGV) threads the bilayer. At 1345–1397 (NLFAGKYHYCFNETSEIRFEIDEVNNKTDCEKLMEGNNTEIRWKNVKINFDNV) the chain is on the extracellular side. The cysteines at positions 1354 and 1374 are disulfide-linked. N-linked (GlcNAc...) asparagine glycans are attached at residues asparagine 1356, asparagine 1370, and asparagine 1381. The segment at residues 1398–1419 (GAGYLALLQVATFKGWMDIMYA) is an intramembrane region (pore-forming). Residues 1420–1436 (AVDSRKPDEQPDYEGNI) lie on the Extracellular side of the membrane. Residues 1437–1458 (YMYIYFVIFIIFGSFFTLNLFI) traverse the membrane as a helical segment. Topologically, residues 1459 to 1521 (GVIIDNFNQQ…IVFDFVTQQA (63 aa)) are cytoplasmic. Serine 1495 carries the post-translational modification Phosphoserine; by PKC. The IV repeat unit spans residues 1502 to 1799 (IPRPLNKIQG…WEKFDPDATQ (298 aa)). The helical transmembrane segment at 1522–1539 (FDIVIMMLICLNMVTMMV) threads the bilayer. Over 1540 to 1550 (ETDTQSKQMEN) the chain is Extracellular. Residues 1551 to 1569 (ILYWINLVFVIFFTCECVL) traverse the membrane as a helical segment. The Cytoplasmic portion of the chain corresponds to 1570-1581 (KMFALRHYYFTI). The helical transmembrane segment at 1582-1599 (GWNIFDFVVVILSIVGMF) threads the bilayer. At 1600–1612 (LADIIEKYFVSPT) the chain is on the extracellular side. The helical transmembrane segment at 1613 to 1629 (LFRVIRLARIGRILRLI) threads the bilayer. Over 1630–1648 (KGAKGIRTLLFALMMSLPA) the chain is Cytoplasmic. The helical transmembrane segment at 1649 to 1666 (LFNIGLLLFLVMFIFSIF) threads the bilayer. Over 1667–1688 (GMSNFAYVKHEAGIDDMFNFET) the chain is Extracellular. The segment at residues 1689 to 1711 (FGNSMICLFQITTSAGWDGLLLP) is an intramembrane region (pore-forming). Residues 1712 to 1740 (ILNRPPDCSLDKEHPGSGFKGDCGNPSVG) are Extracellular-facing. Cysteines 1719 and 1734 form a disulfide. The chain crosses the membrane as a helical span at residues 1741–1763 (IFFFVSYIIISFLIVVNMYIAII). Residues 1764-1978 (LENFSVATEE…RQKEVRESKC (215 aa)) are Cytoplasmic-facing. The region spanning 1893–1922 (EEVSAVVLQRAYRGHLARRGFICRKITSNK) is the IQ domain. The segment at 1924–1978 (ENGGTHREKKESTPSTASLPSYDSVTKPDKEKQQRAEEGRRERAKRQKEVRESKC) is disordered. Residues 1936 to 1947 (TPSTASLPSYDS) show a composition bias toward polar residues. The span at 1949–1978 (TKPDKEKQQRAEEGRRERAKRQKEVRESKC) shows a compositional bias: basic and acidic residues.

It belongs to the sodium channel (TC 1.A.1.10) family. Nav1.6/SCN8A subfamily. In terms of assembly, the voltage-sensitive sodium channel consists of an ion-conducting pore-forming alpha subunit regulated by one or more beta-1 (SCN1B), beta-2 (SCN2B), beta-3 (SCN3B) and/or beta-4 (SCN4B) subunits. Beta-1 (SCN1B) and beta-3 (SCN3B) are non-covalently associated with alpha, while beta-2 (SCN2B) and beta-4 (SCN4B) are covalently linked by disulfide bonds. Interacts with FGF13. Interacts with NEDD4 and NEDD4L. Interacts with FGF14, GBG3, GBB2 and SCN1B. Interacts with TMEM233. Interacts with the conotoxin GVIIJ. Interacts with the scorpion toxin BMK M1. Interacts with CALM1; the interaction modulates the inactivation rate of SCN8A. In terms of processing, may be ubiquitinated by NEDD4L; which would promote its endocytosis. Post-translationally, phosphorylation at Ser-1495 by PKC in a highly conserved cytoplasmic loop slows inactivation of the sodium channel and reduces peak sodium currents. As to expression, expressed in the hippocampus (at protein level). Expressed in brain, cerebellum and spinal cord. Expressed in non-neuronal tissues, such as monocytes/macrophages.

The protein localises to the cell membrane. Its subcellular location is the cell projection. It is found in the axon. The protein resides in the cytoplasmic vesicle. It localises to the podosome. The enzyme catalyses Na(+)(in) = Na(+)(out). In terms of biological role, pore-forming subunit of a voltage-gated sodium channel complex assuming opened or closed conformations in response to the voltage difference across membranes and through which sodium ions selectively pass along their electrochemical gradient. Contributes to neuronal excitability by regulating action potential threshold and propagation. More specifically expressed in non-neuronal cells, could play a role in sodium release from intracellular compartments and participate in the control of podosomes formation and macrophages adhesion and movement. The polypeptide is Sodium channel protein type 8 subunit alpha (Mus musculus (Mouse)).